The following is an 89-amino-acid chain: Small ribosomal subunit protein uS15 (89 aa).

The protein belongs to the universal ribosomal protein uS15 family. As to quaternary structure, part of the 30S ribosomal subunit. Forms a bridge to the 50S subunit in the 70S ribosome, contacting the 23S rRNA.

One of the primary rRNA binding proteins, it binds directly to 16S rRNA where it helps nucleate assembly of the platform of the 30S subunit by binding and bridging several RNA helices of the 16S rRNA. In terms of biological role, forms an intersubunit bridge (bridge B4) with the 23S rRNA of the 50S subunit in the ribosome. The protein is Small ribosomal subunit protein uS15 of Zymomonas mobilis subsp. mobilis (strain ATCC 31821 / ZM4 / CP4).